Reading from the N-terminus, the 266-residue chain is Adaptin ear-binding coat-associated protein 2 (266 aa).

2 disordered regions span residues 164 to 191 and 244 to 266; these read SMKK…LPPP and GDFT…WVQF. At Ser181 the chain carries Phosphoserine. Positions 243 to 246 match the WXXF motif 1 motif; it reads WGDF. Over residues 247 to 258 the composition is skewed to low complexity; sequence TKSTGSTSSQTQ. A WXXF motif 2 motif is present at residues 263-266; that stretch reads WVQF.

It belongs to the NECAP family. As to quaternary structure, interacts with AP1G1 and AP2A1 components of the adapter protein complexes AP-1 and AP-2. Interacts with the GAE domain proteins GGA1, GGA2 and GGA3.

The protein localises to the cytoplasmic vesicle. Its subcellular location is the clathrin-coated vesicle membrane. The protein resides in the cell membrane. Its function is as follows. Involved in endocytosis. In Bos taurus (Bovine), this protein is Adaptin ear-binding coat-associated protein 2 (NECAP2).